Here is a 712-residue protein sequence, read N- to C-terminus: Polyribonucleotide nucleotidyltransferase (712 aa).

Residues Asp487 and Asp493 each coordinate Mg(2+). The region spanning Pro554 to Ile613 is the KH domain. Positions Gly623–Lys691 constitute an S1 motif domain.

It belongs to the polyribonucleotide nucleotidyltransferase family. Requires Mg(2+) as cofactor.

The protein localises to the cytoplasm. The enzyme catalyses RNA(n+1) + phosphate = RNA(n) + a ribonucleoside 5'-diphosphate. Functionally, involved in mRNA degradation. Catalyzes the phosphorolysis of single-stranded polyribonucleotides processively in the 3'- to 5'-direction. The chain is Polyribonucleotide nucleotidyltransferase from Rhizobium johnstonii (strain DSM 114642 / LMG 32736 / 3841) (Rhizobium leguminosarum bv. viciae).